The sequence spans 295 residues: Adrenocorticotropic hormone receptor (295 aa).

Over 1–23 (MRHILNLYENINSTARNNSDCPA) the chain is Extracellular. N-linked (GlcNAc...) asparagine glycosylation is found at asparagine 12 and asparagine 17. Intrachain disulfides connect cysteine 21–cysteine 253 and cysteine 245–cysteine 251. The helical transmembrane segment at 24–49 (VILPEEIFFTVSIVGVLENLMVLLAV) threads the bilayer. Residues 50-58 (AKNKSLQSP) are Cytoplasmic-facing. The helical transmembrane segment at 59–79 (MYFFICSLAISDMLGSLYKIL) threads the bilayer. Topologically, residues 80 to 104 (ENVLIMFRNMGYLEPRGSFESTADD) are extracellular. A helical transmembrane segment spans residues 105–126 (VVDSLFILSLLGSICSLSVIAA). The Cytoplasmic segment spans residues 127-147 (DRYITIFHALQYHSIVTMHRA). The chain crosses the membrane as a helical span at residues 148–168 (LVVLTVLWAGCTGSGITIVTF). The Extracellular portion of the chain corresponds to 169–180 (SHHVPTVIAFTA). The helical transmembrane segment at 181 to 199 (LFPLMLAFILCLYVHMFLL) threads the bilayer. Topologically, residues 200–217 (ARSHARRTSSLPKANMRG) are cytoplasmic. Residues 218-244 (AITLTVLLGVFIFCWAPFVLHVLLMTF) form a helical membrane-spanning segment. Over 245 to 256 (CPADPYCACYMS) the chain is Extracellular. A helical membrane pass occupies residues 257 to 278 (LFQVNGVLIMCNAVIDPFIYAF). At 279–295 (RSPELRVAFKKMVICNW) the chain is on the cytoplasmic side. The S-palmitoyl cysteine moiety is linked to residue cysteine 293.

This sequence belongs to the G-protein coupled receptor 1 family. Homodimer. Interacts with corticotropin (ACTH). Interacts with MRAP; this interaction targets MC2R to the plasma membrane. Interacts with MRAP2; competing with MRAP for binding to MC2R and impairing the binding of corticotropin (ACTH). Ubiquitinated by MGRN1 that may be involved in post-endocytic trafficking and/or degradation of internalized receptor.

It is found in the cell membrane. Hormone receptor primarily expressed in adrenal cortex that plays a key role in regulating adrenocortical function. Upon corticotropin (ACTH) binding, facilitates the release of adrenal glucocorticoids, including cortisol and corticosterone. In addition, MC2R is required for fetal and neonatal adrenal gland development. Mechanistically, activates adenylate cyclase (cAMP), the MAPK cascade as well as the cAMP-dependent protein kinase A pathway leading to steroidogenic factor 1/NR5A1-mediated transcriptional activation. In Ovis aries (Sheep), this protein is Adrenocorticotropic hormone receptor (MC2R).